The sequence spans 344 residues: tRNA N6-adenosine threonylcarbamoyltransferase (344 aa).

Fe cation-binding residues include histidine 111 and histidine 115. Residues 133-137 (LVSGG), aspartate 166, glycine 179, and asparagine 283 contribute to the substrate site. Aspartate 311 is a Fe cation binding site.

This sequence belongs to the KAE1 / TsaD family. Requires Fe(2+) as cofactor.

The protein resides in the cytoplasm. The catalysed reaction is L-threonylcarbamoyladenylate + adenosine(37) in tRNA = N(6)-L-threonylcarbamoyladenosine(37) in tRNA + AMP + H(+). Its function is as follows. Required for the formation of a threonylcarbamoyl group on adenosine at position 37 (t(6)A37) in tRNAs that read codons beginning with adenine. Is involved in the transfer of the threonylcarbamoyl moiety of threonylcarbamoyl-AMP (TC-AMP) to the N6 group of A37, together with TsaE and TsaB. TsaD likely plays a direct catalytic role in this reaction. The sequence is that of tRNA N6-adenosine threonylcarbamoyltransferase from Orientia tsutsugamushi (strain Boryong) (Rickettsia tsutsugamushi).